Reading from the N-terminus, the 147-residue chain is Nucleoside diphosphate kinase (147 aa).

Residues K9, F57, R85, T91, R102, and N112 each coordinate ATP. H115 serves as the catalytic Pros-phosphohistidine intermediate.

This sequence belongs to the NDK family. Homotetramer. Mg(2+) is required as a cofactor.

The protein resides in the cytoplasm. It catalyses the reaction a 2'-deoxyribonucleoside 5'-diphosphate + ATP = a 2'-deoxyribonucleoside 5'-triphosphate + ADP. It carries out the reaction a ribonucleoside 5'-diphosphate + ATP = a ribonucleoside 5'-triphosphate + ADP. In terms of biological role, major role in the synthesis of nucleoside triphosphates other than ATP. The ATP gamma phosphate is transferred to the NDP beta phosphate via a ping-pong mechanism, using a phosphorylated active-site intermediate. The sequence is that of Nucleoside diphosphate kinase from Listeria monocytogenes serotype 4b (strain F2365).